A 297-amino-acid polypeptide reads, in one-letter code: Protein AKTIP homolog (297 aa).

The interval Phe13–Glu75 is disordered. Positions Leu17–Ser42 are enriched in basic and acidic residues. Polar residues predominate over residues Met59–Glu75. Residues Phe84–Asn232 enclose the UBC core domain.

The protein belongs to the ubiquitin-conjugating enzyme family. FTS subfamily.

The polypeptide is Protein AKTIP homolog (Nematostella vectensis (Starlet sea anemone)).